Here is a 283-residue protein sequence, read N- to C-terminus: MDHLSLVPYEGGSAGGGGGGGKYKECMRNHAAAMGGQAFDGCGEYMPASPDSLKCAACGCHRSFHRRAAAGIGGGPVFFRPPPPPQPHSHHAALQGFLPSSVPAPAPPPQLALPYHAVPAAAWHHAAAAAAGRAGSETPPRMDDFGPGSAGGSGSGGGGIFGRKRFRTKFTPEQKERMREFAEKQGWRINRNDDGALDRFCVEIGVKRHVLKVWMHNHKNQLASSPTSAAAAAAGVMNPGAGIGLGTGLGTGISGDGDGDDDDTDDSPPRAAVSSPSPSPISV.

The ZF-HD dimerization-type; degenerate zinc finger occupies 23-68 (YKECMRNHAAAMGGQAFDGCGEYMPASPDSLKCAACGCHRSFHRRA). Disordered stretches follow at residues 131–171 (AGRA…TKFT) and 244–283 (GLGT…PISV). Positions 148-161 (GSAGGSGSGGGGIF) are enriched in gly residues. The homeobox DNA-binding region spans 163-226 (RKRFRTKFTP…NHKNQLASSP (64 aa)). Residues 244-256 (GLGTGLGTGISGD) show a composition bias toward gly residues. A compositionally biased stretch (acidic residues) spans 257–266 (GDGDDDDTDD). Over residues 269 to 283 (PRAAVSSPSPSPISV) the composition is skewed to low complexity.

In terms of assembly, homo- and heterodimer with other ZFHD proteins.

It localises to the nucleus. Its function is as follows. Putative transcription factor. In Oryza sativa subsp. japonica (Rice), this protein is Zinc-finger homeodomain protein 8 (ZHD8).